We begin with the raw amino-acid sequence, 89 residues long: Arminin 375 (89 aa).

The N-terminal stretch at Met-1–Ala-18 is a signal peptide. Residues Lys-19 to Ala-57 constitute a propeptide that is removed on maturation. Alanine amide is present on Ala-86.

This sequence belongs to the arminin family. As to expression, expressed in entodermal epithelium along the body column.

The protein localises to the secreted. Its subcellular location is the target cell membrane. Functionally, antimicrobial peptide with a broad-spectrum antimicrobial activity. Keeps its antibacterial activity under a wide range of salt concentrations that mimic physiological conditions of human blood, which is surprising, since Hydra is an obligate freshwater animal with nearly no salt tolerance. Does not affect red blood cells. In Hydra oligactis (Brown hydra), this protein is Arminin 375.